Reading from the N-terminus, the 382-residue chain is Mannitol-1-phosphate 5-dehydrogenase (382 aa).

3–14 (AVHFGAGNIGRG) is a binding site for NAD(+).

It belongs to the mannitol dehydrogenase family.

The catalysed reaction is D-mannitol 1-phosphate + NAD(+) = beta-D-fructose 6-phosphate + NADH + H(+). In Exiguobacterium sp. (strain ATCC BAA-1283 / AT1b), this protein is Mannitol-1-phosphate 5-dehydrogenase.